The sequence spans 37 residues: Large ribosomal subunit protein bL36 (37 aa).

This sequence belongs to the bacterial ribosomal protein bL36 family.

The polypeptide is Large ribosomal subunit protein bL36 (Nostoc sp. (strain PCC 7120 / SAG 25.82 / UTEX 2576)).